Reading from the N-terminus, the 428-residue chain is Gamma-glutamyl phosphate reductase (428 aa).

Belongs to the gamma-glutamyl phosphate reductase family.

It localises to the cytoplasm. The enzyme catalyses L-glutamate 5-semialdehyde + phosphate + NADP(+) = L-glutamyl 5-phosphate + NADPH + H(+). It functions in the pathway amino-acid biosynthesis; L-proline biosynthesis; L-glutamate 5-semialdehyde from L-glutamate: step 2/2. Its function is as follows. Catalyzes the NADPH-dependent reduction of L-glutamate 5-phosphate into L-glutamate 5-semialdehyde and phosphate. The product spontaneously undergoes cyclization to form 1-pyrroline-5-carboxylate. The sequence is that of Gamma-glutamyl phosphate reductase from Zymomonas mobilis subsp. mobilis (strain ATCC 31821 / ZM4 / CP4).